Consider the following 790-residue polypeptide: Pre-mRNA-splicing factor cwf3 (790 aa).

17 HAT repeats span residues 12-44, 45-77, 89-121, 123-157, 159-190, 193-228, 233-266, 268-303, 331-364, 368-402, 404-440, 457-492, 494-526, 528-562, 567-601, 639-673, and 675-709; these read DLINVDDEPFELELLRDPYSLKSWLRYIKTHEG, STLEKRVLLFERACSELPGSYKIWKSYLELRVA, EAFASVNDCFERSLILLHKMPVIWKLYLQFLMK, PNVTKIRCTFNSALRALPVTQHDDIWDMFTKYAED, GGLFCIHVYRRYIQVEPRAIENYIEILCKLGL, EAARQYEDILNRPVFLSAKRKSNYQIWLEFSELVVQ, TQNIDVEKVFRAGIKRFSDQAGKLWTYLAQYYIR, GDYEKARSTFYEGMNNIMTVRNFTIIFDAFVEFEEQ, KILDKRPLYINDVLLRQNINNVDEWLRRVKFLED, KVVQVYTDAIKNVNPKLAHGSLGKLFSEFARFYEN, DDLEQSRIIFEKATHVPYKTVNELAQVWIDWAEMELR, APRKSHISFFDESLSPQVRLHKSSKIWMYYLDLEES, GTIETTRKLYDRVFELKIATPQVVVNYANLLEE, AYFEDSFKIYERGVALFSYPVAFELWNLYLTKFVK, THMERTRDLFEQALEGCPPEFSKSIYLLYADFEEK, YGVLATRTVYEKAIESLSDSEVKDMCLRFAEMETK, and GEIDRARLIYIHGSQYCDPRVETDYWKAWQEFEIR. The segment at 769–790 is disordered; it reads LAGFVLSKSNPQETSKITGEEN. Positions 775 to 790 are enriched in polar residues; sequence SKSNPQETSKITGEEN.

It belongs to the crooked-neck family. Belongs to the 40S cdc5-associated complex (or cwf complex), a spliceosome sub-complex reminiscent of a late-stage spliceosome composed of the U2, U5 and U6 snRNAs and at least brr2, cdc5, cwf2/prp3, cwf3/syf1, cwf4/syf3, cwf5/ecm2, spp42/cwf6, cwf7/spf27, cwf8, cwf9, cwf10, cwf11, cwf12, prp45/cwf13, cwf14, cwf15, cwf16, cwf17, cwf18, cwf19, cwf20, cwf21, cwf22, cwf23, cwf24, cwf25, cwf26, cyp7/cwf27, cwf28, cwf29/ist3, lea1, msl1, prp5/cwf1, prp10, prp12/sap130, prp17, prp22, sap61, sap62, sap114, sap145, slu7, smb1, smd1, smd3, smf1, smg1 and syf2.

The protein localises to the nucleus. In terms of biological role, involved in pre-mRNA splicing and cell cycle progression. This Schizosaccharomyces pombe (strain 972 / ATCC 24843) (Fission yeast) protein is Pre-mRNA-splicing factor cwf3 (cwf3).